The primary structure comprises 368 residues: Quinolinate synthase (368 aa).

His46 and Ser63 together coordinate iminosuccinate. Residue Cys110 participates in [4Fe-4S] cluster binding. Iminosuccinate contacts are provided by residues 141-143 (YVN) and Ser162. Cys230 contacts [4Fe-4S] cluster. Iminosuccinate-binding positions include 256–258 (HPE) and Thr273. Residue Cys320 coordinates [4Fe-4S] cluster.

This sequence belongs to the quinolinate synthase family. Type 3 subfamily. [4Fe-4S] cluster serves as cofactor.

The protein resides in the cytoplasm. The enzyme catalyses iminosuccinate + dihydroxyacetone phosphate = quinolinate + phosphate + 2 H2O + H(+). Its pathway is cofactor biosynthesis; NAD(+) biosynthesis; quinolinate from iminoaspartate: step 1/1. Catalyzes the condensation of iminoaspartate with dihydroxyacetone phosphate to form quinolinate. The polypeptide is Quinolinate synthase (Bacillus cereus (strain ATCC 10987 / NRS 248)).